The primary structure comprises 307 residues: Dioxygenase cdmD (307 aa).

Fe cation-binding residues include His-146, Asp-148, and His-226.

The protein belongs to the PhyH family. In terms of assembly, homodimer. Fe cation serves as cofactor.

It carries out the reaction verruculide A + 2-oxoglutarate + O2 = chrodrimanin T + succinate + CO2. The catalysed reaction is chrodrimanin E + 2-oxoglutarate + O2 = chrodrimanin A + succinate + CO2. It participates in secondary metabolite biosynthesis; terpenoid biosynthesis. In terms of biological role, dioxygenase; part of the gene cluster that mediates the biosynthesis of chrodrimanin B, a meroterpenoid that acts as a potent blocker of insect GABA-gated chloride channels. The first step of the pathway is the biosynthesis of 6-hydroxymellein by the polyketide synthase cdmE. The prenyltransferase cdmH acts as a 6-hydroxymellein 5-farnesyltransferase and produces the hydrophobic metabolite verruculide C. The FAD-dependent monooxygenase cdmI further converts verruculide C into verruculide B. The terpene cyclase cdmG then produced the pentacyclic molecule 3-hydroxypentacecilide A, the backbone structure of chrodrimanin B, via folding the farnesyl moiety of the substrate into the chair-boat conformation. The short-chain dehydrogenase/reductase cdmF functions as the 3-OH dehydrogenase that oxidizes the C-3 hydroxyl group of 3-hydroxypentacecilide A and produces chrodrimanin C, the dehydrogenated product of 3-hydroxypentacecilide A. The cytochrome P450 monooxygenase cdmJ then accepts both 3-hydroxypentacecilide A and chrodrimanin C and functions as a C-7-beta-hydroxylase to produce respectively chrodrimanin H and chrodrimanin F. The dioxygenase cdmA accepts chrodrimanin H to afford chrodrimanin E, which is further transformed to chrodrimanin A by the dioxygenase cdmD. CdmA can also accept chrodrimanin C as substrate to convert it into verruculide A, which is further converted into chrodrimanin T by cdmD. The last step of the biosynthesis is proposed to be performed by the acetyltransferase cdmC which acetylates chrodrimanin A to yield chrodrimanin B. The pathway may also lead to the production of additional shunt products, including chrodrimanins T and U. This is Dioxygenase cdmD from Talaromyces verruculosus (Penicillium verruculosum).